A 95-amino-acid polypeptide reads, in one-letter code: MGNCNRTQKPSSSSNNLEKPPQAAEFRRTAEPSLYGRYNCKCCWFADKNLITCSDHYLCLRCHQIMLRNSELCNICWKPLPTSIRVPLEASAPDL.

Polar residues predominate over residues 1–17; it reads MGNCNRTQKPSSSSNNL. A disordered region spans residues 1 to 25; that stretch reads MGNCNRTQKPSSSSNNLEKPPQAAE. Glycine 2 carries the N-myristoyl glycine; by host lipid modification. The RING-type; atypical zinc-finger motif lies at 40 to 76; the sequence is CKCCWFADKNLITCSDHYLCLRCHQIMLRNSELCNIC. Positions 90 to 93 match the ASAP motif motif; that stretch reads ASAP.

Belongs to the arenaviridae Z protein family. As to quaternary structure, interacts with protein NP; this interaction probably directs the encapsidated genome to budding sites. Interacts (via RING domain) with polymerase L; this interaction inhibits viral transcription and replication, Z partially blocks the product exit tunnel for the releasing nascent RNA product. Interacts with the glycoprotein complex; this interaction plays a role in virion budding. Interacts with host eIF4E; this interaction results in eIF4E reduced affinity for its substrate, the 5'-m7 G cap structure. Interacts (via late-budding domain) with host TSG101; this interaction is essential for budding and release of viral particles. Interacts with host RPLP0; this interaction may serve to load ribosome-like particles inside the virion. Interacts with host PML; this interaction induces PML bodies redistribution in the cytoplasm upon viral infection. In terms of processing, myristoylation is required for the role of RING finger protein Z in assembly and budding.

It is found in the virion. The protein resides in the host cytoplasm. Its subcellular location is the host perinuclear region. The protein localises to the host cell membrane. In terms of biological role, plays a crucial role in virion assembly and budding. Expressed late in the virus life cycle, it acts as an inhibitor of viral transcription and RNA synthesis by interacting with the viral polymerase L. Presumably recruits the NP encapsidated genome to cellular membranes at budding sites via direct interaction with NP. Plays critical roles in the final steps of viral release by interacting with host TSG101, a member of the vacuolar protein-sorting pathway and using other cellular host proteins involved in vesicle formation pathway. The budding of the virus progeny occurs after association of protein Z with the viral glycoprotein complex SSP-GP1-GP2 at the cell periphery, step that requires myristoylation of protein Z. Also selectively represses protein production by associating with host eIF4E. In cell-based minigenome assay, has an inhibitory effect on the ribonucleoprotein machinery (vRNP), which is responsible for the replication and transcription of the viral genome. The protein is RING finger protein Z of Tacaribe virus (strain Franze-Fernandez) (TCRV).